We begin with the raw amino-acid sequence, 124 residues long: Acidic phospholipase A2 A (124 aa).

Intrachain disulfides connect cysteine 26-cysteine 116, cysteine 28-cysteine 44, cysteine 43-cysteine 95, cysteine 49-cysteine 124, cysteine 50-cysteine 88, cysteine 57-cysteine 81, and cysteine 75-cysteine 86. The Ca(2+) site is built by tyrosine 27, glycine 29, and glycine 31. Histidine 47 is an active-site residue. Aspartate 48 provides a ligand contact to Ca(2+). The active site involves aspartate 89.

It belongs to the phospholipase A2 family. Group II subfamily. D49 sub-subfamily. Ca(2+) is required as a cofactor. As to expression, expressed by the venom gland.

The protein resides in the secreted. The catalysed reaction is a 1,2-diacyl-sn-glycero-3-phosphocholine + H2O = a 1-acyl-sn-glycero-3-phosphocholine + a fatty acid + H(+). In terms of biological role, PLA2 catalyzes the calcium-dependent hydrolysis of the 2-acyl groups in 3-sn-phosphoglycerides. The polypeptide is Acidic phospholipase A2 A (Gloydius halys (Chinese water mocassin)).